The sequence spans 134 residues: Psoriasis susceptibility 1 candidate gene 2 protein homolog (134 aa).

Positions 1–21 are cleaved as a signal peptide; it reads MLTWKLLGLLVLCLCAGGISG. The disordered stretch occupies residues 18-134; the sequence is GISGNGDPSP…DLDPPQEEYR (117 aa). Pro residues-rich tracts occupy residues 39 to 67 and 81 to 98; these read PPLPLGPPIPGDPWPGAPPLFDEPPPPGS and PPKPPSTDPPKPPLPDDP. Residues 122 to 134 show a composition bias toward acidic residues; sequence EEPDLDPPQEEYR.

It is found in the secreted. This Mus musculus (Mouse) protein is Psoriasis susceptibility 1 candidate gene 2 protein homolog (Psors1c2).